The primary structure comprises 84 residues: DNA-directed RNA polymerase subunit Rpo5 (84 aa).

The protein belongs to the archaeal Rpo5/eukaryotic RPB5 RNA polymerase subunit family. As to quaternary structure, part of the RNA polymerase complex.

It is found in the cytoplasm. It catalyses the reaction RNA(n) + a ribonucleoside 5'-triphosphate = RNA(n+1) + diphosphate. Functionally, DNA-dependent RNA polymerase (RNAP) catalyzes the transcription of DNA into RNA using the four ribonucleoside triphosphates as substrates. This chain is DNA-directed RNA polymerase subunit Rpo5, found in Sulfurisphaera tokodaii (strain DSM 16993 / JCM 10545 / NBRC 100140 / 7) (Sulfolobus tokodaii).